Here is a 373-residue protein sequence, read N- to C-terminus: Securin (373 aa).

Residues 1–10 are compositionally biased toward basic and acidic residues; sequence MMPANEDKEN. The interval 1 to 27 is disordered; the sequence is MMPANEDKENNIVYTGNESSGINFPQT. Over residues 12–26 the composition is skewed to polar residues; that stretch reads IVYTGNESSGINFPQ. The D-box motif lies at 85-88; the sequence is RLPL. The disordered stretch occupies residues 177 to 278; the sequence is ADSGKNEESS…LPYVPEGYSP (102 aa). Phosphoserine occurs at positions 185, 186, 212, and 213. Residues 185-194 show a composition bias toward acidic residues; that stretch reads SSDDDEGNED. Residues 225 to 235 show a composition bias toward low complexity; it reads LFNEQGGLQQL. The segment covering 240-256 has biased composition (basic and acidic residues); that stretch reads TKNEQKTKNDKSDKTDD. S277 carries the phosphoserine modification. Position 292 is a phosphoserine; by CDC28 (S292).

This sequence belongs to the securin family. In terms of assembly, interacts with the caspase-like ESP1, and prevents its protease activity probably by covering its active site. Interacts with CDC20. Phosphorylated by CDC28. The phosphorylation may be important for ESP1 localization to the nucleus. In terms of processing, ubiquitinated by the anaphase promoting complex (APC) at the onset of anaphase, conducting to its degradation.

The protein resides in the cytoplasm. It is found in the nucleus. Its function is as follows. Regulatory protein, which plays a central role in chromosome stability. Probably acts by blocking the action of key proteins. During the mitosis, it blocks Separase/ESP1 function, preventing the proteolysis of the cohesin complex and the subsequent segregation of the chromosomes. At the onset of anaphase, it is ubiquitinated, conducting to its destruction and to the liberation of ESP1. This is Securin (PDS1) from Saccharomyces cerevisiae (strain ATCC 204508 / S288c) (Baker's yeast).